Reading from the N-terminus, the 147-residue chain is DNA base-flipping protein (147 aa).

Belongs to the MGMT family. ATL subfamily. In terms of assembly, interacts with several proteins, including UvrA, UvrD and the three subunits of the RNA polymerase.

Involved in DNA damage recognition. Binds DNA containing O(6)-methylguanine and larger O(6)-alkylguanine adducts. Binds to the damaged base and flips the base out of the DNA duplex into an extrahelical conformation, which allows processing by repair proteins. Also affects the regulation of gene expression in response to alkylation. The chain is DNA base-flipping protein from Thermus thermophilus (strain ATCC 27634 / DSM 579 / HB8).